Here is a 251-residue protein sequence, read N- to C-terminus: Exotoxin type A (251 aa).

Positions 1-30 (MENNKKVLKKMVFFVLVTFLGLTISQEVFA) are cleaved as a signal peptide. A disulfide bridge links Cys-117 with Cys-128.

The protein belongs to the staphylococcal/streptococcal toxin family.

Functionally, causative agent of the symptoms associated with scarlet fever, have been associated with streptococcal toxic shock-like disease and may play a role in the early events of rheumatic fever. In Streptococcus pyogenes serotype M18 (strain MGAS8232), this protein is Exotoxin type A (speA).